A 125-amino-acid polypeptide reads, in one-letter code: Holo-[acyl-carrier-protein] synthase (125 aa).

Mg(2+) contacts are provided by aspartate 8 and glutamate 60.

The protein belongs to the P-Pant transferase superfamily. AcpS family. Mg(2+) is required as a cofactor.

It localises to the cytoplasm. It catalyses the reaction apo-[ACP] + CoA = holo-[ACP] + adenosine 3',5'-bisphosphate + H(+). Functionally, transfers the 4'-phosphopantetheine moiety from coenzyme A to a Ser of acyl-carrier-protein. This Wolbachia sp. subsp. Brugia malayi (strain TRS) protein is Holo-[acyl-carrier-protein] synthase.